The chain runs to 538 residues: Carboxypeptidase 2 (538 aa).

A signal peptide spans 1–21 (MVAYRFLTLISLGLGSHCVSA). N-linked (GlcNAc...) asparagine glycosylation is present at N46. Residues 53-76 (PAFTSPGTVSRGFSDGTSGPTRDE) form a disordered region. Residues 71–351 (GPTRDETMEG…VMAKSVLQTA (281 aa)) form the Peptidase M14 domain. Zn(2+)-binding residues include H136, E139, and H224. E322 (proton donor/acceptor) is an active-site residue. 2 N-linked (GlcNAc...) asparagine glycosylation sites follow: N393 and N459.

Belongs to the peptidase M14 family. Zn(2+) serves as cofactor.

It localises to the secreted. In terms of biological role, extracellular metalloprotease that contributes to pathogenicity. The protein is Carboxypeptidase 2 (MCPB) of Trichophyton rubrum (Athlete's foot fungus).